We begin with the raw amino-acid sequence, 25 residues long: Cysteine protease inhibitor 2 (25 aa).

This sequence belongs to the protease inhibitor I3 (leguminous Kunitz-type inhibitor) family. In terms of tissue distribution, cortex of tuber.

Functionally, inhibitor of subtilisin. Inhibits moderately trypsin and chymotrypsin (serine proteases). May protect the plant by inhibiting proteases of invading organisms. This chain is Cysteine protease inhibitor 2, found in Solanum tuberosum (Potato).